The primary structure comprises 780 residues: Cullin-5 (780 aa).

Phosphoserine is present on S34. T210 carries the post-translational modification Phosphothreonine. Residues 713-772 form the Cullin neddylation domain; it reads LRTRKLYIQIMKMRKKISNAQLQTELVEILKNMFLPQKKMIKEQIEWLIEHKYIRRDESD. A Glycyl lysine isopeptide (Lys-Gly) (interchain with G-Cter in NEDD8) cross-link involves residue K724.

Belongs to the cullin family. In terms of assembly, component of multiple cullin-5-RING E3 ubiquitin-protein ligase complexes (ECS complexes, also named CRL5 complexes) formed of CUL5, Elongin BC (ELOB and ELOC), RNF7/RBX2 and a variable SOCS box domain-containing protein as substrate-specific recognition component. CUL5-containing ECS complexes specifically contain RNF7/RBX2, and not RBX1, as catalytic subunit. Component of the ECS(ASB2) complex with the substrate recognition component ASB2. Component of the ECS(ASB6) complex with the substrate recognition component ASB6. Component of the ECS(ASB7) complex with the substrate recognition component ASB7. Component of the ECS(ASB9) complex with the substrate recognition component ASB9. Component of the ECS(ASB11) complex with the substrate recognition component ASB11. Component of the ECS(ASB12) complex with the substrate recognition component ASB12. Component of the ECS(LRRC41) complex with the substrate recognition component LRRC41. Component of the ECS(SOCS1) complex with the substrate recognition component SOCS1. Component of the ECS(SOCS2) complex with the substrate recognition component SOCS2. Component of the ECS(WSB1) complex with the substrate recognition subunit WSB1. Component of the ECS(SOCS3) complex with the substrate recognition component SOCS3. Component of the ECS(SOCS7) complex with the substrate recognition component SOCS7. Component of the ECS(SPSB1) complex with the substrate recognition component SPSB1. Component of the ECS(SPSB3) complex with the substrate recognition component SPSB3. Component of the ECS(SPSB2) complex with the substrate recognition component SPSB2. Component of the ECS(SPSB4) complex with the substrate recognition component SPSB4. Component of the ECS(RAB40) complex with the substrate recognition subunit RAB40A, RAB40B or RAB40C. Component of the ECS(KLHDC1) complex with the substrate recognition component KLHDC1. Component of the ECS(PCMTD1) complex with the substrate recognition subunit PCMTD1. May also form complexes containing RBX1 and ELOA or VHL; additional evidence is however required to confirm this result in vivo. Interacts (when neddylated) with ARIH2; leading to activate the E3 ligase activity of ARIH2. Interacts with ERCC6; the interaction is induced by DNA damaging agents or inhibitors of RNA polymerase II elongation. Interacts with ELOA (via the BC-box). Interacts (unneddylated form) with DCUN1D1, DCUN1D2, DCUN1D3, DCUN1D4 and DCUN1D5; these interactions promote the cullin neddylation. In terms of processing, neddylated; which enhances the ubiquitination activity of ECS complexes and prevents binding of the inhibitor CAND1. Deneddylated via its interaction with the COP9 signalosome (CSN). In terms of tissue distribution, kidney collecting tubules.

Its subcellular location is the nucleus. The protein operates within protein modification; protein ubiquitination. Its function is as follows. Core component of multiple cullin-5-RING E3 ubiquitin-protein ligase complexes (ECS complexes, also named CRL5 complexes), which mediate the ubiquitination and subsequent proteasomal degradation of target proteins. Acts a scaffold protein that contributes to catalysis through positioning of the substrate and the ubiquitin-conjugating enzyme. The functional specificity of the E3 ubiquitin-protein ligase complex depends on the variable SOCS box-containing substrate recognition component. Acts as a key regulator of neuron positioning during cortex development: component of various SOCS-containing ECS complexes, such as the ECS(SOCS7) complex, that regulate reelin signaling by mediating ubiquitination and degradation of DAB1. ECS(SOCS1) seems to direct ubiquitination of JAK2. The ECS(SOCS2) complex mediates the ubiquitination and subsequent proteasomal degradation of phosphorylated EPOR and GHR. The ECS(SPSB3) complex catalyzes ubiquitination of nuclear CGAS. ECS(KLHDC1) complex is part of the DesCEND (destruction via C-end degrons) pathway and mediates ubiquitination and degradation of truncated SELENOS selenoprotein produced by failed UGA/Sec decoding, which ends with a glycine. The ECS(ASB9) complex mediates ubiquitination and degradation of CKB. As part of some ECS complex, promotes 'Lys-11'-linked ubiquitination and degradation of BTRC. As part of a multisubunit ECS complex, polyubiquitinates monoubiquitinated POLR2A. As part of the ECS(RAB40C) complex, mediates ANKRD28 ubiquitination and degradation, thereby regulating protein phosphatase 6 (PP6) complex activity and focal adhesion assembly during cell migration. As part of the ECS(RAB40A) complex, mediates RHOU 'Lys-48'-linked ubiquitination and degradation, thus inhibiting focal adhesion disassembly during cell migration. As part of the ECS(RAB40B) complex, mediates LIMA1/EPLIN and RAP2 ubiquitination, thereby regulating actin cytoskeleton dynamics and stress fiber formation during cell migration. May form a cell surface vasopressin receptor. The chain is Cullin-5 (CUL5) from Oryctolagus cuniculus (Rabbit).